The following is a 333-amino-acid chain: Late embryogenesis abundant protein 1 (333 aa).

Disordered stretches follow at residues methionine 1–alanine 20 and lysine 116–glutamine 246. Residues serine 3 to arginine 52 adopt a coiled-coil conformation. Composition is skewed to basic and acidic residues over residues lysine 116–valine 163, glutamate 172–lysine 219, and aspartate 227–aspartate 241.

Belongs to the LEA type 4 family.

This chain is Late embryogenesis abundant protein 1 (LEA1), found in Oryza sativa subsp. indica (Rice).